Here is a 110-residue protein sequence, read N- to C-terminus: Iron-sulfur cluster assembly protein CyaY (110 aa).

It belongs to the frataxin family.

In terms of biological role, involved in iron-sulfur (Fe-S) cluster assembly. May act as a regulator of Fe-S biogenesis. The protein is Iron-sulfur cluster assembly protein CyaY of Pseudomonas putida (strain ATCC 700007 / DSM 6899 / JCM 31910 / BCRC 17059 / LMG 24140 / F1).